The sequence spans 172 residues: Thioredoxin M5, chloroplastic (172 aa).

Residues 1–59 (MALETCFRAWATLHAPQPPSSGGSRDRLLLSGAGSSQSKPRLSVASPSPLRPASRFACQ) constitute a chloroplast transit peptide. The disordered stretch occupies residues 17-47 (QPPSSGGSRDRLLLSGAGSSQSKPRLSVASP). Residues 60-171 (CSNVVDEVVV…LATIIDKYVS (112 aa)) enclose the Thioredoxin domain. Active-site nucleophile residues include cysteine 95 and cysteine 98. Cysteine 95 and cysteine 98 are joined by a disulfide.

It belongs to the thioredoxin family. Plant M-type subfamily. In terms of tissue distribution, expressed in leaves and at lower levels in flowers.

The protein localises to the plastid. The protein resides in the chloroplast. Functionally, thiol-disulfide oxidoreductase probably involved in the redox regulation of chloroplastic enzymes. Required for chloroplast biogenesis and differentiation. Functions as an electron donor for plastidial 2-Cys peroxiredoxins and participates in hydrogen peroxide scavenging system in chloroplasts. Possesses reducing activity towards insulin disulfide bonds. This chain is Thioredoxin M5, chloroplastic (TRXM), found in Oryza sativa subsp. japonica (Rice).